A 398-amino-acid polypeptide reads, in one-letter code: MAKLTVKDVDLKGKKVLVRVDFNVPLKDGVITNDNRITAALPTIKYIIEQGGRAILFSHLGRVKEEADKAGKSLAPVAADLAAKLGQDVVFPGVTRGAELEAAINVLEDGQVLLVENTRYEDVDGXKESKNDPELGKYWASLGDGIFVNDAFGTAHRAHASNVGISANVEKAVAGFLLENEIAYIQEAVETPERPFVAILGGSKVSDKIGVIENLLEKADKVLIGGGMTYTFYKAQGIEIGNSLVEEDKLDVAKALLEKANGKLILPVDSKEANAFAGYTEVRDTEGEAVSEGFLGLDIGPKSIAKFDEALTGAKTVVWNGPMGVFENPDFQAGTIGVMDAIVKQPGVKSIIGGGDSAAAAINLGRADKFSWISTGGGASMELLEGKVLPGLAALTEK.

Residues 21 to 23 (DFN), arginine 36, 59 to 62 (HLGR), arginine 119, and arginine 157 each bind substrate. ATP-binding positions include lysine 208, glycine 296, glutamate 327, and 354 to 357 (GGDS).

The protein belongs to the phosphoglycerate kinase family. In terms of assembly, monomer.

It is found in the cytoplasm. It carries out the reaction (2R)-3-phosphoglycerate + ATP = (2R)-3-phospho-glyceroyl phosphate + ADP. It participates in carbohydrate degradation; glycolysis; pyruvate from D-glyceraldehyde 3-phosphate: step 2/5. This Streptococcus pneumoniae serotype 19F (strain G54) protein is Phosphoglycerate kinase.